A 316-amino-acid chain; its full sequence is Phospholipase A1 3 (316 aa).

A signal peptide spans 1–4 (ADDL). Residues 5–14 (TTLRNGTLDR) constitute a propeptide that is removed on maturation. Cysteine 20 and cysteine 103 are oxidised to a cystine. The active-site Nucleophile is the serine 153. Aspartate 181 acts as the Charge relay system in catalysis. Disulfide bonds link cysteine 192–cysteine 197 and cysteine 235–cysteine 240. The active-site Charge relay system is histidine 242. Intrachain disulfides connect cysteine 257–cysteine 284, cysteine 258–cysteine 309, and cysteine 277–cysteine 282.

It belongs to the AB hydrolase superfamily. Lipase family. As to expression, expressed by the venom gland.

The protein localises to the secreted. The catalysed reaction is a 1,2-diacyl-sn-glycero-3-phosphocholine + H2O = a 2-acyl-sn-glycero-3-phosphocholine + a fatty acid + H(+). Catalyzes the hydrolysis of phosphatidylcholine with phospholipase A1 activity. May act as an allergen and induce hemolytic activity. This is Phospholipase A1 3 from Polistes dominula (European paper wasp).